Here is a 235-residue protein sequence, read N- to C-terminus: Glucosamine-6-phosphate deaminase (235 aa).

Residue Asp-62 is the Proton acceptor; for enolization step of the active site. Asn-128 functions as the For ring-opening step in the catalytic mechanism. The active-site Proton acceptor; for ring-opening step is the His-130. The For ring-opening step role is filled by Glu-135.

Belongs to the glucosamine/galactosamine-6-phosphate isomerase family. NagB subfamily.

It catalyses the reaction alpha-D-glucosamine 6-phosphate + H2O = beta-D-fructose 6-phosphate + NH4(+). It participates in amino-sugar metabolism; N-acetylneuraminate degradation; D-fructose 6-phosphate from N-acetylneuraminate: step 5/5. Catalyzes the reversible isomerization-deamination of glucosamine 6-phosphate (GlcN6P) to form fructose 6-phosphate (Fru6P) and ammonium ion. The chain is Glucosamine-6-phosphate deaminase from Streptococcus sanguinis (strain SK36).